The following is a 482-amino-acid chain: Transcription factor Sox-9 (482 aa).

Disordered regions lie at residues 1 to 66 (MNLL…ETED) and 160 to 274 (RLRI…FRDV). Low complexity predominate over residues 30–41 (SAGSPCPSGSGS). Positions 42-52 (DTENTRPQENT) are enriched in polar residues. Composition is skewed to basic and acidic residues over residues 56-66 (GDPELKKETED) and 160-174 (RLRI…DYKY). Residue Lys-61 forms a Glycyl lysine isopeptide (Lys-Gly) (interchain with G-Cter in SUMO) linkage. Positions 63-103 (ETEDEKFPVCIREAVSQVLKGYDWTLVPMPVRVNGSSKSKP) are dimerization (DIM). Residues 63–103 (ETEDEKFPVCIREAVSQVLKGYDWTLVPMPVRVNGSSKSKP) form a PQA region. A DNA-binding region (HMG box) is located at residues 105-173 (VKRPMNAFMV…QHKKDHPDYK (69 aa)). Polar residues predominate over residues 211 to 220 (SPHSASSMSE). The segment at 224-308 (PGEHSGQSQG…LPPNGHPGVG (85 aa)) is transactivation domain (TAM). Short sequence motifs (9aaTAD) lie at residues 276–285 (IGELSSEVIS) and 291–299 (DVNEFDQYL). The disordered stretch occupies residues 295-395 (FDQYLPPNGH…HSPQQLNYSS (101 aa)). 2 stretches are compositionally biased toward polar residues: residues 308-326 (GSTQ…TPSA) and 351-366 (HSLS…SQQR). The interval 366–482 (RTHIKTEQLS…QPVYTQLTRP (117 aa)) is transactivation domain (TAC). Residue Lys-370 forms a Glycyl lysine isopeptide (Lys-Gly) (interchain with G-Cter in SUMO) linkage. Residues 375–390 (SPSHYSDQQQQHSPQQ) show a composition bias toward low complexity. A 9aaTAD 3 motif is present at residues 433-441 (SGLYSNFSY). Residues 448 to 482 (PMYTPIADTTGVPSIPQTHSPQHWEQPVYTQLTRP) are disordered. Over residues 458–482 (GVPSIPQTHSPQHWEQPVYTQLTRP) the composition is skewed to polar residues.

In terms of assembly, interacts with the sumoylation factors ube2i/ubc9 and sumo1. In terms of processing, sumoylated. Lys-370 is the major site of sumoylation, although sumoylation at Lys-61 also occurs. Sumoylation plays a key role in regulating formation of the neural crest and otic placode. As to expression, expressed in both male and female gonads from after metamorphosis through to adult stages. In the testis, expression is restricted to the supporting Sertoli-like cells. Conversely in the ovary, expression is localized to primary oocytes (at protein level). In developing limbs, expressed before chrondrocytes form (stage 52 tadpoles) and throughout the cartilaginous anlagen until stage 56, after which expression ceases in the enlarged cells of the diaphysis. At later stages, expression continues in the chondrocytes of the epiphysis and metaphysis, and weak expression is seen in most of the diaphysis.

The protein resides in the nucleus. It localises to the cytoplasm. Functionally, transcription factor that plays a key role in chondrocytes differentiation and skeletal development. Specifically binds the 5'-ACAAAG-3' DNA motif present in enhancers and super-enhancers and promotes expression of genes important for chondrogenesis, including COL2A1. Plays a central role in successive steps of chondrocyte differentiation. Absolutely required for precartilaginous condensation, the first step in chondrogenesis during which skeletal progenitors differentiate into prechondrocytes. Together with SOX5 and SOX6, required for overt chondrogenesis when condensed prechondrocytes differentiate into early stage chondrocytes, the second step in chondrogenesis. Later, required to direct hypertrophic maturation and block osteoblast differentiation of growth plate chondrocytes: maintains chondrocyte columnar proliferation, delays prehypertrophy and then prevents osteoblastic differentiation of chondrocytes. Also required for chondrocyte hypertrophy, both indirectly, by keeping the lineage fate of chondrocytes, and directly, by remaining present in upper hypertrophic cells. Low lipid levels are the main nutritional determinant for chondrogenic commitment of skeletal progenitor cells: when lipids levels are low, FOXO transcription factors promote expression of SOX9, which induces chondrogenic commitment and suppresses fatty acid oxidation. In addition to cartilage development, also acts as a regulator of proliferation and differentiation in epithelial stem/progenitor cells. Unlikely to play a role in sex determination but may function during testicular and ovarian differentiation. This is Transcription factor Sox-9 from Xenopus tropicalis (Western clawed frog).